Here is a 3169-residue protein sequence, read N- to C-terminus: FRAS1-related extracellular matrix protein 2 (3169 aa).

The disordered stretch occupies residues 1–24 (MHSAGTPGLSSRRTGNSTSFQPGP). The first 46 residues, 1–46 (MHSAGTPGLSSRRTGNSTSFQPGPPPPPRLLLLLLLLLSLVSRVPA), serve as a signal peptide directing secretion. The span at 8–21 (GLSSRRTGNSTSFQ) shows a compositional bias: polar residues. Residues 47–3113 (QPAAFGRALL…SPSSAVSLVT (3067 aa)) are Extracellular-facing. 12 CSPG repeats span residues 319-413 (KPSF…LELE), 438-537 (APVV…LRMV), 560-675 (PPVL…FRVQ), 700-807 (PPEL…FQVE), 828-919 (QPPE…LEVS), 945-1037 (HPTG…LSLS), 1066-1168 (APEI…FRCS), 1189-1282 (EQPE…IKLT), 1303-1399 (TPRM…FDVT), 1420-1512 (VFPD…FQVT), 1532-1621 (KKPV…FTVT), and 1655-1752 (VPQI…FAVE). Asn-358 carries an N-linked (GlcNAc...) asparagine glycan. N-linked (GlcNAc...) asparagine glycosylation is found at Asn-1244 and Asn-1369. Asn-1584 and Asn-1741 each carry an N-linked (GlcNAc...) asparagine glycan. Calx-beta domains are found at residues 1759 to 1858 (LTYQ…VVLS), 1871 to 1982 (ATVE…VLLS), 1997 to 2103 (QVTI…LVLR), 2118 to 2220 (VSIN…LVLG), and 2238 to 2342 (TLIR…VHLK). Residues 3036–3057 (SLVSQGKPQSTTKSRKKREIRS) form a disordered region. The segment covering 3037 to 3047 (LVSQGKPQSTT) has biased composition (polar residues). A helical membrane pass occupies residues 3114 to 3134 (VVGGTTVGLLTICLTVIAVLM). Topologically, residues 3135-3169 (CRGKESFRGKDAPKGSSSSEPMVPPQSHHNDSSEV) are cytoplasmic. Residues 3141–3169 (FRGKDAPKGSSSSEPMVPPQSHHNDSSEV) form a disordered region.

Belongs to the FRAS1 family. In terms of assembly, interacts with FREM1.

Its subcellular location is the cell membrane. In terms of biological role, extracellular matrix protein required for maintenance of the integrity of the skin epithelium and for maintenance of renal epithelia. Required for epidermal adhesion. Involved in the development of eyelids and the anterior segment of the eyeballs. The protein is FRAS1-related extracellular matrix protein 2 (FREM2) of Homo sapiens (Human).